A 919-amino-acid chain; its full sequence is WD repeat-containing protein 47 (919 aa).

The 33-residue stretch at 10-42 (KEVEIIKLILDFLNSKKLHISMLALEKESGVIN) folds into the LisH domain. The 58-residue stretch at 45–102 (FSDDMLFLRQLILDGQWDEVLQFIQPLECMEKFDKKRFRYIILKQKFLEALCVNNAMS) folds into the CTLH domain. Residue Thr285 is modified to Phosphothreonine. Phosphoserine is present on residues Ser289, Ser292, Ser297, and Ser312. The segment at 393 to 421 (GQSSVSEKEPANGAQNPGPAKQEKNELRD) is disordered. Position 422 is a phosphoserine (Ser422). The segment at 500–590 (LNQQCNGSKG…SLSRSKGEED (91 aa)) is disordered. The span at 517–551 (VTSFTTPPQDSSQRLTHDASNIHTSTPRNPGSTNH) shows a compositional bias: polar residues. Thr542 bears the Phosphothreonine mark. WD repeat units follow at residues 604-643 (EDTQ…DPSA), 659-698 (HHKG…CNAT), 706-748 (MHDG…GQGL), 753-791 (GHTG…CVRV), 798-837 (GTGS…MVQS), 840-879 (PHSS…TKQL), and 886-918 (EHKD…WTYN).

In terms of assembly, interacts with MAP1S (via WD repeats).

It localises to the cytoplasm. It is found in the cytoskeleton. In Homo sapiens (Human), this protein is WD repeat-containing protein 47 (WDR47).